Here is a 95-residue protein sequence, read N- to C-terminus: Large ribosomal subunit protein bL21 (95 aa).

The protein belongs to the bacterial ribosomal protein bL21 family. As to quaternary structure, part of the 50S ribosomal subunit. Contacts protein L20.

In terms of biological role, this protein binds to 23S rRNA in the presence of protein L20. This chain is Large ribosomal subunit protein bL21, found in Chlorobaculum tepidum (strain ATCC 49652 / DSM 12025 / NBRC 103806 / TLS) (Chlorobium tepidum).